A 362-amino-acid polypeptide reads, in one-letter code: sn-glycerol-3-phosphate import ATP-binding protein UgpC (362 aa).

Positions 4 to 235 constitute an ABC transporter domain; it reads LSFRNVKKTY…PASTFVAGFI (232 aa). Residue 37–44 participates in ATP binding; that stretch reads GPSGCGKS.

Belongs to the ABC transporter superfamily. sn-glycerol-3-phosphate importer (TC 3.A.1.1.3) family. The complex is composed of two ATP-binding proteins (UgpC), two transmembrane proteins (UgpA and UgpE) and a solute-binding protein (UgpB).

The protein localises to the cell inner membrane. The catalysed reaction is sn-glycerol 3-phosphate(out) + ATP + H2O = sn-glycerol 3-phosphate(in) + ADP + phosphate + H(+). Part of the ABC transporter complex UgpBAEC involved in sn-glycerol-3-phosphate (G3P) import. Responsible for energy coupling to the transport system. This is sn-glycerol-3-phosphate import ATP-binding protein UgpC from Bordetella bronchiseptica (strain ATCC BAA-588 / NCTC 13252 / RB50) (Alcaligenes bronchisepticus).